Consider the following 179-residue polypeptide: Large ribosomal subunit protein uL5 (179 aa).

It belongs to the universal ribosomal protein uL5 family. As to quaternary structure, part of the 50S ribosomal subunit; part of the 5S rRNA/L5/L18/L25 subcomplex. Contacts the 5S rRNA and the P site tRNA. Forms a bridge to the 30S subunit in the 70S ribosome.

This is one of the proteins that bind and probably mediate the attachment of the 5S RNA into the large ribosomal subunit, where it forms part of the central protuberance. In the 70S ribosome it contacts protein S13 of the 30S subunit (bridge B1b), connecting the 2 subunits; this bridge is implicated in subunit movement. Contacts the P site tRNA; the 5S rRNA and some of its associated proteins might help stabilize positioning of ribosome-bound tRNAs. The sequence is that of Large ribosomal subunit protein uL5 from Prochlorococcus marinus (strain NATL2A).